Here is a 637-residue protein sequence, read N- to C-terminus: Transcription factor GLABRA 3 (637 aa).

One can recognise a bHLH domain in the interval 437–486 (DETGNHAVLEKKRREKLNERFMTLRKIIPSINKIDKVSILDDTIEYLQEL). A disordered region spans residues 497–521 (RESTDTETRGTMTMKRKKPCDAGER). Residues 541–637 (NVGEAEPADT…EALQRVAWIC (97 aa)) are binding with MYB0/GL1 and MYB23.

Efficient DNA binding requires dimerization with another bHLH protein. Homodimer and heterodimer with BHLH2. Interacts directly with TTG1 and MYB0/GL1 to form a complex. Its interaction with TRY prevents MYB0/GL1 binding. Interacts with MYB75/PAP1, MYB90/PAP2, TT2, CPC, MYB23 and MYB66/WER. Interacts with MYB82. Mostly expressed in roots and flowers. Also present in stems and leaves, and, to a lower extent, in hypocotyls. Expressed in epidermal root hair cells (trichoblasts) and moves to root hairless cells (atrichoblasts) by a cell-to-cell movement through plasmodesmata (at protein level).

The protein resides in the nucleus. Its function is as follows. Transcription activator, when associated with MYB75/PAP1, MYB90/PAP2 or TT2. Involved in epidermal cell fate specification. Negatively regulates stomata formation, but, in association with TTG1 and MYB0/GL1, promotes trichome formation, branching and endoreplication. Also regulates trichome cell wall maturation. Together with MYB66/WER, promotes the formation of non-hair cells in root epidermis cells in the N position. Whereas together with CPC, promotes the formation of hair cells in root epidermis cells in the H position by inhibiting non-hair cell formation. Also seems to play a role in the activation of anthocyanin biosynthesis, probably together with MYB75/PAP1. Activates the transcription of GL2. This Arabidopsis thaliana (Mouse-ear cress) protein is Transcription factor GLABRA 3 (GL3).